A 349-amino-acid polypeptide reads, in one-letter code: Ferredoxin--NADP reductase (349 aa).

Residues Asp-35, Gln-43, Tyr-48, Val-88, Phe-123, Asp-288, and Thr-329 each contribute to the FAD site.

Belongs to the ferredoxin--NADP reductase type 2 family. In terms of assembly, homodimer. Requires FAD as cofactor.

The enzyme catalyses 2 reduced [2Fe-2S]-[ferredoxin] + NADP(+) + H(+) = 2 oxidized [2Fe-2S]-[ferredoxin] + NADPH. This chain is Ferredoxin--NADP reductase, found in Colwellia psychrerythraea (strain 34H / ATCC BAA-681) (Vibrio psychroerythus).